We begin with the raw amino-acid sequence, 157 residues long: Transcriptional repressor NrdR (157 aa).

A zinc finger lies at 3–34 (CPFCNTVDTKVIDSRLVSEGSQIKRRRQCAIC). The ATP-cone domain occupies 49–139 (PRVIKNDDLL…VYRSFEDVRE (91 aa)).

The protein belongs to the NrdR family. The cofactor is Zn(2+).

Functionally, negatively regulates transcription of bacterial ribonucleotide reductase nrd genes and operons by binding to NrdR-boxes. The sequence is that of Transcriptional repressor NrdR from Hamiltonella defensa subsp. Acyrthosiphon pisum (strain 5AT).